Reading from the N-terminus, the 1014-residue chain is MRRNKTTYSLLQTILVACLLTVTPTFASNKPTTDESGTISHTICDGEAAELSCPAGKVISIVLGNYGRFSVAVCLPDNDIVPSNINCQNHKTKSILEKKCNGDSMCYFTVDKKTFTEDPCPNTPKYLEVKYNCVVPATTTTTTTTTSTTTTDSSLIVDEEEEAQKDALNSDVIKPVKKKEDVFCSATNRRGVNWQNTKSGTTSSAPCPEGSSGKQLWACTEEGQWLTEFPNSAGCESNWISSRNSVLSGVISSEDVSGLPEFLRNLGSETRRPMVGGDLPKVLHLLEKTVNVIAEESWAYQHLPLSNKGAVEVMNYMLRNQEIWGSWDVTKRKEFASRFILAAEKAMVASAKGMMTSAESNVIVQPAITVEISHKIKMSSQPTDYILFPSAALWNGQNVDNVNIPRDAILKINKDETQVFFSSFDNLGAQMTPSDVTVAIAGTDQTEVRKRRVVSRIVGASLIENGKERRVENLTQPVRITFYHKESSVRHLSNPTCVWWNHHELKWKPSGCKLSYHNKTMTSCDCTHLTHFAVLMDVRGHDLNEIDQTLLTLLTYVGCIISIICLLLTFFAYLIFSRNGGDRVFIHENLCLSLAIAEITFLAGITRTEDSLQCGIIAVALMYMFLSALTWMLLEGYHIHRMLTEVFPSDPRRFTYLLVGYIPPAIITLVAYLYNSDGFGTPDHCWLSTQNNFIWFFAGPACFIFCANSLVLVKTLCTVYQHTSGGYLPCRHDVDSGRSIRNWVKGSLALASLLGVTWIFGLFWVEDSRSIVMAYVFTISNSLQGLFIFLFHVVFAEKMRKDVGHWMYRRGCGGSSNSSPNHKRHNVQRDLMSPGVNSSTGSDFLYNTNDKYLTNSDTTNRLVYNGIMNHPNQMSVYQQHPHHQIYEQQPGTYDYATIAYGDMMPGHRVAAPPAYQRLAVAEGRYGSQHQLYQGWHHRPPPEFSPPPPPLSTGPPNSRHYGTGSSGRRPPSSKMSDDSAYSDGSSSMLTTEVTPQGQTVLRIDLNKPSMYCQDL.

Residues 1–27 (MRRNKTTYSLLQTILVACLLTVTPTFA) form the signal peptide. Residue Asn-4 is glycosylated (N-linked (GlcNAc...) asparagine). Residues 28–555 (SNKPTTDESG…IDQTLLTLLT (528 aa)) lie on the Extracellular side of the membrane. The SUEL-type lectin domain maps to 43–134 (ICDGEAAELS…KYLEVKYNCV (92 aa)). One can recognise a GAIN-B domain in the interval 359–542 (ESNVIVQPAI…AVLMDVRGHD (184 aa)). Asn-473 and Asn-518 each carry an N-linked (GlcNAc...) asparagine glycan. 2 cysteine pairs are disulfide-bonded: Cys-497–Cys-524 and Cys-512–Cys-526. The tract at residues 497–542 (CVWWNHHELKWKPSGCKLSYHNKTMTSCDCTHLTHFAVLMDVRGHD) is GPS. The chain crosses the membrane as a helical span at residues 556 to 576 (YVGCIISIICLLLTFFAYLIF). Residues 577–584 (SRNGGDRV) are Cytoplasmic-facing. The chain crosses the membrane as a helical span at residues 585–605 (FIHENLCLSLAIAEITFLAGI). Over 606-613 (TRTEDSLQ) the chain is Extracellular. A helical membrane pass occupies residues 614-634 (CGIIAVALMYMFLSALTWMLL). At 635-653 (EGYHIHRMLTEVFPSDPRR) the chain is on the cytoplasmic side. Residues 654 to 674 (FTYLLVGYIPPAIITLVAYLY) traverse the membrane as a helical segment. At 675–692 (NSDGFGTPDHCWLSTQNN) the chain is on the extracellular side. Residues 693–713 (FIWFFAGPACFIFCANSLVLV) form a helical membrane-spanning segment. The Cytoplasmic portion of the chain corresponds to 714–745 (KTLCTVYQHTSGGYLPCRHDVDSGRSIRNWVK). The helical transmembrane segment at 746 to 766 (GSLALASLLGVTWIFGLFWVE) threads the bilayer. Residues 767–770 (DSRS) lie on the Extracellular side of the membrane. Residues 771–791 (IVMAYVFTISNSLQGLFIFLF) form a helical membrane-spanning segment. Over 792 to 1014 (HVVFAEKMRK…NKPSMYCQDL (223 aa)) the chain is Cytoplasmic. Disordered regions lie at residues 814-833 (GSSN…DLMS) and 932-994 (YQGW…EVTP). Positions 941-952 (PEFSPPPPPLST) are enriched in pro residues. Low complexity predominate over residues 965–986 (SGRRPPSSKMSDDSAYSDGSSS).

The protein belongs to the G-protein coupled receptor 2 family. LN-TM7 subfamily. Monomer and homodimer. Autoproteolytically processed at the GPS region of the GAIN-B domain; this cleavage modulates receptor activity. As to expression, expressed in epidermal precursor cells and pharyngeal primordium. In adults expression is seen in pharyngeal muscle cells and nervous system, the nerve ring, the gonad, and the vulva.

It localises to the cell membrane. In terms of biological role, has a role in the establishment of anterior-posterior polarity in tissues during embryogenesis. Required for the alignment of the mitotic spindles and division planes. May have a role in cell death events. Required for normal defection and oocyte fertilization. Involved in sperm function. Operates in pharyngeal pumping during feeding. This is Latrophilin-like protein 1 from Caenorhabditis elegans.